The primary structure comprises 520 residues: Cyclin-L2 (520 aa).

Cyclin-like stretches follow at residues 81–183 and 196–280; these read ELIQ…RVLK and KIIV…KILQ. A disordered region spans residues 309–520; the sequence is RAKGLLPPGS…DHPGHSRHRR (212 aa). A phosphoserine mark is found at Ser-330, Ser-337, Ser-347, and Ser-350. Basic and acidic residues predominate over residues 356–366; the sequence is RKMEGPKKAKG. The residue at position 368 (Ser-368) is a Phosphoserine. Positions 384–422 are RS; the sequence is RSREQSYSRSPSRSASPKRRKSDSGSTSGGSKSQSRSRS. The segment covering 407 to 429 has biased composition (low complexity); it reads SGSTSGGSKSQSRSRSRSDSPPR. Residues 440-453 show a composition bias toward basic and acidic residues; it reads SEVRGSRKSKDCKH. A compositionally biased stretch (basic residues) spans 454-471; it reads LTQKPHKSRSRSSSRSRS. Composition is skewed to basic and acidic residues over residues 472–481 and 489–514; these read RSRERTDSSG and YYRD…DHPG.

The protein belongs to the cyclin family. Cyclin L subfamily. As to quaternary structure, interacts with CDK11A, CDK11B, CDK12, CDK13 and POLR2A, the hyperphosphorylated C-terminal domain (CTD) of RNA polymerase II. May form a ternary complex with CDK11B and casein kinase II (CKII). Interacts with pre-mRNA-splicing factors, including at least SRSF1, SRSF2 and SRSF7/SLU7.

It is found in the nucleus speckle. The protein localises to the nucleus. The protein resides in the nucleoplasm. Functionally, involved in pre-mRNA splicing. May induce cell death, possibly by acting on the transcription and RNA processing of apoptosis-related factors. The polypeptide is Cyclin-L2 (Ccnl2) (Rattus norvegicus (Rat)).